A 265-amino-acid chain; its full sequence is Probable U2 small nuclear ribonucleoprotein A' (265 aa).

LRR repeat units follow at residues 20-41 (RERE…GATL), 43-64 (QFDT…PHLP), 65-86 (RLKC…LEEA), and 89-110 (NLGS…EPLV). One can recognise an LRRCT domain in the interval 123–161 (NPVSTKPNYREYMAYKFPQLRLLDFRKIKQKDRQAAQEF).

It belongs to the U2 small nuclear ribonucleoprotein A family. In terms of assembly, interacts with the SMN complex.

It is found in the nucleus. Functionally, involved in pre-mRNA splicing as component of the spliceosome. Associated with sn-RNP U2, where it contributes to the binding of stem loop IV of U2 snRNA. In the germ line, has a role in oogenesis, by regulating spermatogenesis and nurse cell nuclei chromatin decondensation and dispersal, probably by regulating the splicing of proteins necessary for germline differentiation such as the meiotic protein mei-P26. This is Probable U2 small nuclear ribonucleoprotein A' (U2A) from Drosophila melanogaster (Fruit fly).